The sequence spans 485 residues: Inosine-5'-monophosphate dehydrogenase (485 aa).

CBS domains lie at 97-154 (IIRD…VSDV) and 155-211 (MVRD…PDAS). NAD(+) is bound by residues D246 and 295 to 297 (GIG). G297 and G299 together coordinate K(+). S300 lines the IMP pocket. C302 is a binding site for K(+). C302 acts as the Thioimidate intermediate in catalysis. IMP is bound by residues 335–337 (DGG), 358–359 (GS), and 382–386 (YRGMG). R398 serves as the catalytic Proton acceptor. IMP is bound at residue E409. Positions 463, 464, and 465 each coordinate K(+).

The protein belongs to the IMPDH/GMPR family. Homotetramer. It depends on K(+) as a cofactor.

The enzyme catalyses IMP + NAD(+) + H2O = XMP + NADH + H(+). It functions in the pathway purine metabolism; XMP biosynthesis via de novo pathway; XMP from IMP: step 1/1. Mycophenolic acid (MPA) is a non-competitive inhibitor that prevents formation of the closed enzyme conformation by binding to the same site as the amobile flap. In contrast, mizoribine monophosphate (MZP) is a competitive inhibitor that induces the closed conformation. MPA is a potent inhibitor of mammalian IMPDHs but a poor inhibitor of the bacterial enzymes. MZP is a more potent inhibitor of bacterial IMPDH. In terms of biological role, catalyzes the conversion of inosine 5'-phosphate (IMP) to xanthosine 5'-phosphate (XMP), the first committed and rate-limiting step in the de novo synthesis of guanine nucleotides, and therefore plays an important role in the regulation of cell growth. The protein is Inosine-5'-monophosphate dehydrogenase of Thermoplasma acidophilum (strain ATCC 25905 / DSM 1728 / JCM 9062 / NBRC 15155 / AMRC-C165).